A 582-amino-acid chain; its full sequence is Urocanate reductase (582 aa).

Residues 1-20 (MHYKKSIIGIAVTATAIIAG) form the signal peptide. Cysteine 21 carries N-palmitoyl cysteine lipidation. Cysteine 21 is lipidated: S-diacylglycerol cysteine. Threonine 93 is subject to FMN phosphoryl threonine. 8 residues coordinate FAD: alanine 143, glutamate 162, asparagine 170, serine 171, glycine 175, alanine 176, alanine 285, and aspartate 352. Arginine 411 serves as the catalytic Proton donor. Positions 521, 550, and 565 each coordinate FAD.

The protein belongs to the FAD-dependent oxidoreductase 2 family. FRD/SDH subfamily. The cofactor is FAD. Requires FMN as cofactor.

The protein resides in the cell membrane. It carries out the reaction dihydrourocanate + A = urocanate + AH2. Catalyzes the two-electron reduction of urocanate to dihydrourocanate (also named imidazole propionate or deamino-histidine). The physiological electron donor is unknown; it might be the membrane-bound tetraheme cytochrome c (CymA). Enables anaerobic growth with urocanate as a sole terminal electron acceptor, and thus can provide the cells with a niche where no other bacteria can compete and survive. Is unable to reduce cinnamate and other unsaturated organic acids such as acrylic, crotonic, fumaric and orotic acids. Has no fumarate reductase or succinate dehydrogenase activity. This is Urocanate reductase (urdA) from Shewanella oneidensis (strain ATCC 700550 / JCM 31522 / CIP 106686 / LMG 19005 / NCIMB 14063 / MR-1).